The sequence spans 577 residues: Proline--tRNA ligase (577 aa).

It belongs to the class-II aminoacyl-tRNA synthetase family. ProS type 1 subfamily. As to quaternary structure, homodimer.

Its subcellular location is the cytoplasm. The enzyme catalyses tRNA(Pro) + L-proline + ATP = L-prolyl-tRNA(Pro) + AMP + diphosphate. Functionally, catalyzes the attachment of proline to tRNA(Pro) in a two-step reaction: proline is first activated by ATP to form Pro-AMP and then transferred to the acceptor end of tRNA(Pro). As ProRS can inadvertently accommodate and process non-cognate amino acids such as alanine and cysteine, to avoid such errors it has two additional distinct editing activities against alanine. One activity is designated as 'pretransfer' editing and involves the tRNA(Pro)-independent hydrolysis of activated Ala-AMP. The other activity is designated 'posttransfer' editing and involves deacylation of mischarged Ala-tRNA(Pro). The misacylated Cys-tRNA(Pro) is not edited by ProRS. This is Proline--tRNA ligase from Chlamydia abortus (strain DSM 27085 / S26/3) (Chlamydophila abortus).